A 314-amino-acid polypeptide reads, in one-letter code: Serine/threonine-protein phosphatase PP2A-5 catalytic subunit (314 aa).

Asp62, His64, Asp90, and Asn122 together coordinate Mn(2+). His123 acts as the Proton donor in catalysis. The Mn(2+) site is built by His172 and His246.

Belongs to the PPP phosphatase family. PP-2A subfamily. The cofactor is Mn(2+).

Its subcellular location is the cytoplasm. It catalyses the reaction O-phospho-L-seryl-[protein] + H2O = L-seryl-[protein] + phosphate. It carries out the reaction O-phospho-L-threonyl-[protein] + H2O = L-threonyl-[protein] + phosphate. This Nicotiana tabacum (Common tobacco) protein is Serine/threonine-protein phosphatase PP2A-5 catalytic subunit (NPP5).